A 187-amino-acid chain; its full sequence is Large ribosomal subunit protein uL5 (187 aa).

Belongs to the universal ribosomal protein uL5 family. In terms of assembly, part of the 50S ribosomal subunit; part of the 5S rRNA/L5/L18/L25 subcomplex. Contacts the 5S rRNA and the P site tRNA. Forms a bridge to the 30S subunit in the 70S ribosome.

This is one of the proteins that bind and probably mediate the attachment of the 5S RNA into the large ribosomal subunit, where it forms part of the central protuberance. In the 70S ribosome it contacts protein S13 of the 30S subunit (bridge B1b), connecting the 2 subunits; this bridge is implicated in subunit movement. Contacts the P site tRNA; the 5S rRNA and some of its associated proteins might help stabilize positioning of ribosome-bound tRNAs. The protein is Large ribosomal subunit protein uL5 of Corynebacterium diphtheriae (strain ATCC 700971 / NCTC 13129 / Biotype gravis).